A 96-amino-acid chain; its full sequence is Protein RnfH (96 aa).

This sequence belongs to the UPF0125 (RnfH) family.

This is Protein RnfH from Cronobacter sakazakii (strain ATCC BAA-894) (Enterobacter sakazakii).